A 507-amino-acid chain; its full sequence is Wax ester synthase/diacylglycerol acyltransferase 5 (507 aa).

At 1–211 the chain is on the cytoplasmic side; that stretch reads MEIKIRRRRG…LKTSSRCYSR (211 aa). The active-site Proton acceptor is the His161. The helical transmembrane segment at 212-232 threads the bilayer; sequence FFWLVMVLWSAALLVLNTVCD. The Lumenal segment spans residues 233–507; it reads ALEFIATALF…VVVQERTSTQ (275 aa). Asn314 and Asn421 each carry an N-linked (GlcNAc...) asparagine glycan.

It in the N-terminal section; belongs to the long-chain O-acyltransferase family. As to expression, mostly expressed in flowers and siliques.

It localises to the cell membrane. It is found in the endoplasmic reticulum membrane. The enzyme catalyses a long chain fatty alcohol + a fatty acyl-CoA = a wax ester + CoA. The catalysed reaction is an acyl-CoA + a 1,2-diacyl-sn-glycerol = a triacyl-sn-glycerol + CoA. It functions in the pathway glycerolipid metabolism; triacylglycerol biosynthesis. It participates in lipid metabolism. In terms of biological role, bifunctional wax ester synthase/diacylglycerol acyltransferase. Involved in cuticular wax biosynthesis. The protein is Wax ester synthase/diacylglycerol acyltransferase 5 of Arabidopsis thaliana (Mouse-ear cress).